The primary structure comprises 388 residues: MNCTLTDNTRAINVASNLGAPQQRTIFAKERISIPGYYEIIQFLGKGAYGTVCSVKFKGRSPAARIAVKKISNIFNKEILLKRAIRELKFMNFFKGHKNIVNLIDLEIVTSSPYDGLYCYQELIDYDLAKVIHSSVQLSEFHIKYFLYQILCGLKYIHSADVIHRDLKPGNILCTLNGCLKICDFGLARGIHAGFFKCHSTVQPHITNYVATRWYRAPELLLSNQPYSKSVDIWAVGCILAEFYARKPVFMGRDSMHQIFEIIKVLGTPDKDILIKFGTIKAWNLGKNSNNPVYKKIPWSNIFPFASHEAINLIESLLHWDSTHRLNVEQAISHPFLNEVRKPDDEPVCLQGPFDFTYESELNSMSKLRDYLVEEVKNFKTDLSSSSL.

Residues 38-337 (YEIIQFLGKG…VEQAISHPFL (300 aa)) enclose the Protein kinase domain. ATP contacts are provided by residues 44-52 (LGKGAYGTV) and Lys69. Asp166 functions as the Proton acceptor in the catalytic mechanism. A TXY motif is present at residues 207–209 (TNY).

The protein belongs to the protein kinase superfamily. CMGC Ser/Thr protein kinase family. MAP kinase subfamily. Interacts with GSC2. Requires Mg(2+) as cofactor. Dually phosphorylated on Thr-207 and Tyr-209, which activates the enzyme.

The enzyme catalyses L-seryl-[protein] + ATP = O-phospho-L-seryl-[protein] + ADP + H(+). It carries out the reaction L-threonyl-[protein] + ATP = O-phospho-L-threonyl-[protein] + ADP + H(+). Its activity is regulated as follows. Activated by tyrosine and threonine phosphorylation. Required for spore wall assembly. Required for proper deposition of the two outer layers of the spore wall, the chitosan and dityrosine layers. Negatively regulates GSC2, an alternate catalytic subunit of the 1,3-beta-glucan synthase (GS). Participates in a developmentally regulated signal transduction pathway that coordinates cytodifferentiation events with the transcriptional program. The polypeptide is Sporulation-specific mitogen-activated protein kinase SMK1 (SMK1) (Saccharomyces cerevisiae (strain ATCC 204508 / S288c) (Baker's yeast)).